Consider the following 123-residue polypeptide: MANTQLKSDAIMDMMKEHLSTDAGKEVTEKIGLVYQINIAPKKLGFEEVTYIVDLKKGEVTKGKYEGGKVDATFSFKDDDFVKVATGKMNPQMAFIRGAMKIKGSLSAAQKFTPDIFPKPSKL.

The SCP2 domain occupies 16 to 113; the sequence is KEHLSTDAGK…GSLSAAQKFT (98 aa). The Microbody targeting signal signature appears at 121–123; the sequence is SKL.

In terms of tissue distribution, expressed in most tissues including seedlings, cotyledons, inflorescence, leaves, stems, roots, siliques and flower buds, with the highest levels in floral tissues and in maturing seeds.

The protein localises to the peroxisome. Enhances the transfer of lipids between membranes in vitro. Active on phosphatidylcholine (PC), 1-palmitoyl 2-oleoyl phosphatidylcholine (POPC) and ergosterol, and, to a lower extent, dimyristoyl phosphatidic acid, stigmasterol, desmosterol, beta-sitosterol and steryl glucoside. Inactive or poorly active on palmitic acid, stearoyl-coenzyme A, cholesterol, glucosylceramide and ceramide. Required during seeds and seedlings development. In Arabidopsis thaliana (Mouse-ear cress), this protein is Sterol carrier protein 2.